Consider the following 149-residue polypeptide: Calmodulin (149 aa).

Residue A2 is modified to N-acetylalanine. EF-hand domains are found at residues 8–43 (EQIAEFKEAFSLFDKDGDGTITTKELGTVMRSLGQN), 44–79 (PTEAELQDMINEVDSDGNGTIDFPEFLSLMARKMKD), 81–116 (DTEEELIEAFKVFDRDGNGFISAAELRHVMTNLGEK), and 117–149 (LTDEEVDEMIREADVDGDGQINYEEFVKMMMAK). Residues D21, D23, D25, T27, E32, D57, D59, N61, T63, E68, D94, D96, N98, and E105 each contribute to the Ca(2+) site. The residue at position 116 (K116) is an N6,N6,N6-trimethyllysine. Ca(2+) contacts are provided by D130, D132, D134, Q136, and E141.

Belongs to the calmodulin family.

In terms of biological role, calmodulin mediates the control of a large number of enzymes, ion channels and other proteins by Ca(2+). Among the enzymes to be stimulated by the calmodulin-Ca(2+) complex are a number of protein kinases and phosphatases. This is Calmodulin from Heterocapsa triquetra (Dinoflagellate).